Here is a 437-residue protein sequence, read N- to C-terminus: UDP-glucuronate 4-epimerase 4 (437 aa).

Residues 30–50 (SLTKFAFFSFFLLCLISLLFL) traverse the membrane as a helical segment. Positions 56–76 (INPSSPSDPSRRSLRTNTYGG) are disordered. A helical transmembrane segment spans residues 96–116 (GITVLVTGAAGFVGTHVSAAL). 98 to 129 (TVLVTGAAGFVGTHVSAALKRRGDGVIGLDNF) is an NAD(+) binding site. Catalysis depends on Y248, which acts as the Proton acceptor.

Belongs to the NAD(P)-dependent epimerase/dehydratase family. In terms of assembly, homodimer. In terms of tissue distribution, in roots, leaves, siliques, flowers, pollen and stems.

The protein localises to the golgi apparatus. It localises to the golgi stack membrane. The enzyme catalyses UDP-alpha-D-glucuronate = UDP-alpha-D-galacturonate. Activated by glycerol, not effected by dimethyl sulfoxide and inhibited by high concentration of monovalent salts, UDP-xylose, UDP-arabinose or UDP. In terms of biological role, involved in the synthesis of the negatively charged monosaccharide that forms the backbone of pectic cell wall components. This is UDP-glucuronate 4-epimerase 4 (GAE4) from Arabidopsis thaliana (Mouse-ear cress).